Here is a 509-residue protein sequence, read N- to C-terminus: Maturase K (509 aa).

It belongs to the intron maturase 2 family. MatK subfamily.

The protein resides in the plastid. Usually encoded in the trnK tRNA gene intron. Probably assists in splicing its own and other chloroplast group II introns. In Castilleja linariifolia (Wyoming Indian paintbrush), this protein is Maturase K.